We begin with the raw amino-acid sequence, 171 residues long: S-ribosylhomocysteine lyase (171 aa).

Residues His-54, His-58, and Cys-128 each coordinate Fe cation.

The protein belongs to the LuxS family. In terms of assembly, homodimer. The cofactor is Fe cation.

The catalysed reaction is S-(5-deoxy-D-ribos-5-yl)-L-homocysteine = (S)-4,5-dihydroxypentane-2,3-dione + L-homocysteine. Functionally, involved in the synthesis of autoinducer 2 (AI-2) which is secreted by bacteria and is used to communicate both the cell density and the metabolic potential of the environment. The regulation of gene expression in response to changes in cell density is called quorum sensing. Catalyzes the transformation of S-ribosylhomocysteine (RHC) to homocysteine (HC) and 4,5-dihydroxy-2,3-pentadione (DPD). This chain is S-ribosylhomocysteine lyase, found in Serratia proteamaculans (strain 568).